A 118-amino-acid polypeptide reads, in one-letter code: UPF0102 protein Franean1_1156 (118 aa).

The protein belongs to the UPF0102 family.

This is UPF0102 protein Franean1_1156 from Parafrankia sp. (strain EAN1pec).